Here is a 207-residue protein sequence, read N- to C-terminus: Large ribosomal subunit protein bL25 (207 aa).

Positions 171–207 (ESVVTVEVPEDATESTTAPEAAAAPADAAAAPAADAK) are disordered. A compositionally biased stretch (low complexity) spans 184–207 (ESTTAPEAAAAPADAAAAPAADAK).

The protein belongs to the bacterial ribosomal protein bL25 family. CTC subfamily. As to quaternary structure, part of the 50S ribosomal subunit; part of the 5S rRNA/L5/L18/L25 subcomplex. Contacts the 5S rRNA. Binds to the 5S rRNA independently of L5 and L18.

This is one of the proteins that binds to the 5S RNA in the ribosome where it forms part of the central protuberance. The protein is Large ribosomal subunit protein bL25 of Bifidobacterium longum subsp. infantis (strain ATCC 15697 / DSM 20088 / JCM 1222 / NCTC 11817 / S12).